Here is an 88-residue protein sequence, read N- to C-terminus: Small ribosomal subunit protein uS17 (88 aa).

The protein belongs to the universal ribosomal protein uS17 family. As to quaternary structure, part of the 30S ribosomal subunit.

Its function is as follows. One of the primary rRNA binding proteins, it binds specifically to the 5'-end of 16S ribosomal RNA. In Mycoplasmopsis pulmonis (strain UAB CTIP) (Mycoplasma pulmonis), this protein is Small ribosomal subunit protein uS17.